A 526-amino-acid chain; its full sequence is Peptide chain release factor 3 (526 aa).

A tr-type G domain is found at 9 to 277 (DKRRTFAIIS…GIVEWAPKPL (269 aa)). Residues 18 to 25 (SHPDAGKT), 86 to 90 (DTPGH), and 140 to 143 (NKLD) contribute to the GTP site.

This sequence belongs to the TRAFAC class translation factor GTPase superfamily. Classic translation factor GTPase family. PrfC subfamily.

The protein resides in the cytoplasm. Increases the formation of ribosomal termination complexes and stimulates activities of RF-1 and RF-2. It binds guanine nucleotides and has strong preference for UGA stop codons. It may interact directly with the ribosome. The stimulation of RF-1 and RF-2 is significantly reduced by GTP and GDP, but not by GMP. The sequence is that of Peptide chain release factor 3 from Shewanella sp. (strain ANA-3).